The primary structure comprises 27 residues: Cysteine-rich venom protein tropirin (27 aa).

The protein belongs to the CRISP family. Post-translationally, contains 8 disulfide bonds. Expressed by the venom gland.

The protein resides in the secreted. In terms of biological role, blocks contraction of smooth muscle elicited by high potassium-induced depolarization, but does not block caffeine-stimulated contraction. May target voltage-gated calcium channels on smooth muscle. This chain is Cysteine-rich venom protein tropirin, found in Tropidechis carinatus (Australian rough-scaled snake).